The primary structure comprises 81 residues: Sulfur carrier protein TusA (81 aa).

The active-site Cysteine persulfide intermediate is the Cys-19.

Belongs to the sulfur carrier protein TusA family.

It is found in the cytoplasm. Sulfur carrier protein which probably makes part of a sulfur-relay system. The chain is Sulfur carrier protein TusA from Shewanella piezotolerans (strain WP3 / JCM 13877).